The sequence spans 240 residues: Pyridoxine 5'-phosphate synthase (240 aa).

Residue N7 coordinates 3-amino-2-oxopropyl phosphate. Residue 9-10 (DH) coordinates 1-deoxy-D-xylulose 5-phosphate. Residue R18 coordinates 3-amino-2-oxopropyl phosphate. H43 functions as the Proton acceptor in the catalytic mechanism. Residues R45 and H50 each contribute to the 1-deoxy-D-xylulose 5-phosphate site. The active-site Proton acceptor is E70. T100 lines the 1-deoxy-D-xylulose 5-phosphate pocket. H191 acts as the Proton donor in catalysis. 3-amino-2-oxopropyl phosphate is bound by residues G192 and 213 to 214 (GH).

The protein belongs to the PNP synthase family. Homooctamer; tetramer of dimers.

It localises to the cytoplasm. The catalysed reaction is 3-amino-2-oxopropyl phosphate + 1-deoxy-D-xylulose 5-phosphate = pyridoxine 5'-phosphate + phosphate + 2 H2O + H(+). It functions in the pathway cofactor biosynthesis; pyridoxine 5'-phosphate biosynthesis; pyridoxine 5'-phosphate from D-erythrose 4-phosphate: step 5/5. Its function is as follows. Catalyzes the complicated ring closure reaction between the two acyclic compounds 1-deoxy-D-xylulose-5-phosphate (DXP) and 3-amino-2-oxopropyl phosphate (1-amino-acetone-3-phosphate or AAP) to form pyridoxine 5'-phosphate (PNP) and inorganic phosphate. This is Pyridoxine 5'-phosphate synthase from Coxiella burnetii (strain Dugway 5J108-111).